A 95-amino-acid chain; its full sequence is Small integral membrane protein 26 (95 aa).

Residues methionine 13 to methionine 35 form a helical membrane-spanning segment.

It belongs to the SMIM26 family. As to quaternary structure, interacts with AGK and SLC25A11. Detected in kidney (at protein level).

Its subcellular location is the mitochondrion outer membrane. Functionally, may play a role in cell viability. The polypeptide is Small integral membrane protein 26 (Homo sapiens (Human)).